Here is a 27-residue protein sequence, read N- to C-terminus: uncharacterized protein (27 aa).

This is an uncharacterized protein from Escherichia coli (strain K12).